Here is a 247-residue protein sequence, read N- to C-terminus: Protein NipSnap homolog 3B (247 aa).

N6-succinyllysine occurs at positions 45 and 57.

The protein belongs to the NipSnap family.

The protein is Protein NipSnap homolog 3B (NIPSNAP3B) of Homo sapiens (Human).